A 522-amino-acid chain; its full sequence is Non-structural maintenance of chromosome element 6 (522 aa).

A compositionally biased stretch (basic and acidic residues) spans 482–492; that stretch reads KQKDRYFKDKT. The interval 482 to 522 is disordered; the sequence is KQKDRYFKDKTSNLSMKENKSFSAKKVKKGKKKNKRQAYKR. Residues 504 to 522 are compositionally biased toward basic residues; sequence SAKKVKKGKKKNKRQAYKR.

As to quaternary structure, component of the smc5/smc6 complex which consists of two subcomplexes, smc5-smc6-nse2 and nse1-nse2-nse4. Interacts with nse5.

It is found in the nucleus. Its subcellular location is the chromosome. Functionally, acts in a DNA repair pathway for removal of UV-induced DNA damage that is distinct from classical nucleotide excision repair and in repair of ionizing radiation damage. Functions in homologous recombination repair of DNA double strand breaks and in recovery of stalled replication forks. May prevent formation of excessive Holliday junctions or assist in their resolution. The sequence is that of Non-structural maintenance of chromosome element 6 (nse6) from Schizosaccharomyces pombe (strain 972 / ATCC 24843) (Fission yeast).